The chain runs to 179 residues: UPF0398 protein SSU05_0416 (179 aa).

It belongs to the UPF0398 family.

This is UPF0398 protein SSU05_0416 from Streptococcus suis (strain 05ZYH33).